We begin with the raw amino-acid sequence, 503 residues long: Aminoaldehyde dehydrogenase 2, peroxisomal (503 aa).

Na(+) is bound by residues Ile28, Asp99, and Leu189. 238-245 contacts NAD(+); it reads GSTMTGSK. Glu260 functions as the Proton acceptor in the catalytic mechanism. 2 residues coordinate NAD(+): Cys294 and Glu393. Cys294 (nucleophile) is an active-site residue. A Microbody targeting signal motif is present at residues 501–503; the sequence is SKL.

Belongs to the aldehyde dehydrogenase family. Expressed in leaves, flowers and fruits.

The protein resides in the peroxisome. The catalysed reaction is 4-aminobutanal + NAD(+) + H2O = 4-aminobutanoate + NADH + 2 H(+). It catalyses the reaction 3-aminopropanal + NAD(+) + H2O = beta-alanine + NADH + 2 H(+). Its pathway is amine and polyamine biosynthesis; betaine biosynthesis via choline pathway; betaine from betaine aldehyde: step 1/1. Functionally, dehydrogenase that catalyzes the oxidation of several aminoaldehydes. Metabolizes and detoxifies aldehyde products of polyamine degradation to non-toxic amino acids. Catalyzes the oxidation of 4-aminobutanal and 3-aminopropanal to 4-aminobutanoate and beta-alanine, respectively. The sequence is that of Aminoaldehyde dehydrogenase 2, peroxisomal from Malus domestica (Apple).